The chain runs to 284 residues: 4-diphosphocytidyl-2-C-methyl-D-erythritol kinase (284 aa).

Residue K14 is part of the active site. Residue 98 to 108 (PMGGGLGGGSS) participates in ATP binding. D140 is a catalytic residue.

The protein belongs to the GHMP kinase family. IspE subfamily.

It catalyses the reaction 4-CDP-2-C-methyl-D-erythritol + ATP = 4-CDP-2-C-methyl-D-erythritol 2-phosphate + ADP + H(+). The protein operates within isoprenoid biosynthesis; isopentenyl diphosphate biosynthesis via DXP pathway; isopentenyl diphosphate from 1-deoxy-D-xylulose 5-phosphate: step 3/6. Catalyzes the phosphorylation of the position 2 hydroxy group of 4-diphosphocytidyl-2C-methyl-D-erythritol. This Shewanella sp. (strain MR-7) protein is 4-diphosphocytidyl-2-C-methyl-D-erythritol kinase.